Consider the following 130-residue polypeptide: MTSELGIFYRSDFDRAWCDMSAETIKFTDSAAQRVSELLAEEGDQNLKLRVYVTGGGCSGFQYGFTFDEVVNEDDTVVEKNGVSVLVDPMSLQYLQGAEIDYTENVSGSQFVIRNPNATTTCGCGSSFSV.

Iron-sulfur cluster contacts are provided by Cys-58, Cys-122, and Cys-124.

The protein belongs to the HesB/IscA family. In terms of assembly, homodimer. Requires iron-sulfur cluster as cofactor.

In terms of biological role, required for insertion of 4Fe-4S clusters for at least IspG. This chain is Iron-sulfur cluster insertion protein ErpA 2, found in Methylococcus capsulatus (strain ATCC 33009 / NCIMB 11132 / Bath).